Here is a 477-residue protein sequence, read N- to C-terminus: Ribulose bisphosphate carboxylase large chain (477 aa).

Residues 1 to 2 constitute a propeptide that is removed on maturation; the sequence is MS. An N-acetylproline modification is found at Pro-3. The substrate site is built by Asn-123 and Thr-173. Lys-175 functions as the Proton acceptor in the catalytic mechanism. Substrate is bound at residue Lys-177. Lys-201, Asp-203, and Glu-204 together coordinate Mg(2+). Lys-201 carries the post-translational modification N6-carboxylysine. Catalysis depends on His-294, which acts as the Proton acceptor. Arg-295, His-327, and Ser-379 together coordinate substrate.

This sequence belongs to the RuBisCO large chain family. Type I subfamily. In terms of assembly, heterohexadecamer of 8 large chains and 8 small chains; disulfide-linked. The disulfide link is formed within the large subunit homodimers. Requires Mg(2+) as cofactor. In terms of processing, the disulfide bond which can form in the large chain dimeric partners within the hexadecamer appears to be associated with oxidative stress and protein turnover.

It is found in the plastid. Its subcellular location is the chloroplast. The catalysed reaction is 2 (2R)-3-phosphoglycerate + 2 H(+) = D-ribulose 1,5-bisphosphate + CO2 + H2O. The enzyme catalyses D-ribulose 1,5-bisphosphate + O2 = 2-phosphoglycolate + (2R)-3-phosphoglycerate + 2 H(+). Functionally, ruBisCO catalyzes two reactions: the carboxylation of D-ribulose 1,5-bisphosphate, the primary event in carbon dioxide fixation, as well as the oxidative fragmentation of the pentose substrate in the photorespiration process. Both reactions occur simultaneously and in competition at the same active site. This is Ribulose bisphosphate carboxylase large chain from Lolium perenne (Perennial ryegrass).